A 115-amino-acid polypeptide reads, in one-letter code: MLVCVLLYSFRLFGIQGEAQLTESGGDLVHLEGPLRLSCAASWFTFSIYEIHWVCQASGKGLEWVAVIWRGESHQYNADYVRGRLTTSRDNTKYMLYMQMISLRTQNMAAFNCAG.

The first 17 residues, 1-17 (MLVCVLLYSFRLFGIQG), serve as a signal peptide directing secretion. A framework-1 region spans residues 18–42 (EAQLTESGGDLVHLEGPLRLSCAAS). The 97-residue stretch at 19-115 (AQLTESGGDL…QNMAAFNCAG (97 aa)) folds into the Ig-like domain. Positions 43 to 50 (WFTFSIYE) are complementarity-determining-1. Residues 51-67 (IHWVCQASGKGLEWVAV) are framework-2. Cys-55 and Cys-113 form a disulfide bridge. The interval 68–75 (IWRGESHQ) is complementarity-determining-2. The interval 76-113 (YNADYVRGRLTTSRDNTKYMLYMQMISLRTQNMAAFNC) is framework-3. A complementarity-determining-3 region spans residues 114-115 (AG).

As to quaternary structure, immunoglobulins are composed of two identical heavy chains and two identical light chains; disulfide-linked.

Its subcellular location is the secreted. It is found in the cell membrane. Functionally, probable non-functional open reading frame (ORF) of V region of the variable domain of immunoglobulin heavy chains. Non-functional ORF generally cannot participate in the synthesis of a productive immunoglobulin chain due to altered V-(D)-J or switch recombination and/or splicing site (at mRNA level) and/or conserved amino acid change (protein level). Immunoglobulins, also known as antibodies, are membrane-bound or secreted glycoproteins produced by B lymphocytes. In the recognition phase of humoral immunity, the membrane-bound immunoglobulins serve as receptors which, upon binding of a specific antigen, trigger the clonal expansion and differentiation of B lymphocytes into immunoglobulins-secreting plasma cells. Secreted immunoglobulins mediate the effector phase of humoral immunity, which results in the elimination of bound antigens. The antigen binding site is formed by the variable domain of one heavy chain, together with that of its associated light chain. Thus, each immunoglobulin has two antigen binding sites with remarkable affinity for a particular antigen. The variable domains are assembled by a process called V-(D)-J rearrangement and can then be subjected to somatic hypermutations which, after exposure to antigen and selection, allow affinity maturation for a particular antigen. This Homo sapiens (Human) protein is Probable non-functional immunoglobulin heavy variable 8-51-1.